A 227-amino-acid polypeptide reads, in one-letter code: Nudix hydrolase 27, chloroplastic (227 aa).

The transit peptide at 1-44 (MAVKASGFIGKSAISVHLDFSSFPVKFSCLKQFSVSSPKPLVVL) directs the protein to the chloroplast. The Nudix hydrolase domain occupies 61–208 (GYRKNVGICL…KRPVYEHVIK (148 aa)). A Nudix box motif is present at residues 94-115 (GGADEGEDLRNAAFRELREETG). Mn(2+) contacts are provided by glutamate 109 and glutamate 113.

It belongs to the Nudix hydrolase family. Mg(2+) serves as cofactor. Requires Mn(2+) as cofactor. Expressed in roots, leaves, stems and inflorescences.

Its subcellular location is the plastid. It localises to the chloroplast. In terms of biological role, mediates the hydrolysis of some nucleoside diphosphate derivatives. Can use diadenosine 5',5'''-P(1)P(5) pentaphosphate (Ap(5)A) as substrates. The chain is Nudix hydrolase 27, chloroplastic (NUDT27) from Arabidopsis thaliana (Mouse-ear cress).